A 707-amino-acid polypeptide reads, in one-letter code: Choline transporter-like protein 4 (707 aa).

Topologically, residues 1 to 32 (MGRKQNENEAHGNSAKYDPSFRGPIKNRGCTD) are cytoplasmic. Residues 33-53 (IICCVLFLIFILGYIIVGLVA) traverse the membrane as a helical segment. Topologically, residues 54–227 (WVYGDPRQVL…KIFEDFAQSW (174 aa)) are extracellular. N67, N185, N195, and N196 each carry an N-linked (GlcNAc...) asparagine glycan. The helical transmembrane segment at 228-248 (YWILVALGVALALSLLFILLL) threads the bilayer. At 249-250 (RL) the chain is on the cytoplasmic side. A helical membrane pass occupies residues 251-271 (VAAPLVLLLIVGVLAVLAYGI). The Extracellular portion of the chain corresponds to 272–307 (YHCWQQYQVFRDKGASITQLGFTTNFSAYQSVKETW). N296 is a glycosylation site (N-linked (GlcNAc...) asparagine). Residues 308–328 (LAALIVLAVLEGILLLMLIFL) form a helical membrane-spanning segment. Residues 329 to 356 (RQRIRIAIALLKEASRAVGQMMSTMFYP) lie on the Cytoplasmic side of the membrane. Residues 357–377 (LVTFVLLVICIGYWAVTALYL) form a helical membrane-spanning segment. At 378–452 (ATSGQPQYIY…GVLGLFWTVN (75 aa)) the chain is on the extracellular side. N391, N403, and N413 each carry an N-linked (GlcNAc...) asparagine glycan. Residues 453 to 473 (WVLALGQCVLAGAFASFYWAF) traverse the membrane as a helical segment. Residues 474–498 (HKPRDIPTFPLSSAFIRTLRYHTGS) are Cytoplasmic-facing. Residues 499–519 (LAFGALILSLVQIARVILEYI) form a helical membrane-spanning segment. The Extracellular portion of the chain corresponds to 520–557 (DHKLRGSQNPVARCIICCFKCCLWCLEKFIKFLNRNAY). Residues 558–578 (IMIAIYGKNFCVSAKNAFMLL) traverse the membrane as a helical segment. Topologically, residues 579–594 (MRNVLRVVVLDKVTDL) are cytoplasmic. Residues 595-615 (LLFFGKLLVVGGVGVLSFFFF) form a helical membrane-spanning segment. The Extracellular segment spans residues 616–635 (SGRIKGLGKDFENPNLNYYW). The chain crosses the membrane as a helical span at residues 636 to 656 (LPIMTSIMGAYVIASGFFSVF). Residues 657–707 (GMCVDTLFLCFLEDLERNDGSQERPYYMPKALLKILGKKNEAPTGGKTRKK) are Cytoplasmic-facing.

It belongs to the CTL (choline transporter-like) family. Post-translationally, N-glycosylated; N-glycosylation of Asn-67 and Asn-391 is required for a proper thiamine pyrophosphate uptake. In terms of tissue distribution, expressed in colon and cecum.

Its subcellular location is the membrane. It localises to the apical cell membrane. The enzyme catalyses choline(out) + n H(+)(in) = choline(in) + n H(+)(out). It catalyses the reaction thiamine diphosphate(out) = thiamine diphosphate(in). Functionally, choline transporter that plays a role in the choline-acetylcholine system and is required to the efferent innervation of hair cells in the olivocochlear bundle for the maintenance of physiological function of outer hair cells and the protection of hair cells from acoustic injury. Also described as a thiamine pyrophosphate transporter in colon, may mediate the absorption of microbiota-generated thiamine pyrophosphate and contribute to host thiamine (vitamin B1) homeostasis. This is Choline transporter-like protein 4 from Mus musculus (Mouse).